The following is a 1819-amino-acid chain: Protein REDUCED CHLOROPLAST COVERAGE 2 (1819 aa).

Over residues 1 to 17 the composition is skewed to basic residues; the sequence is MAPKAGKTKPHKSKGEK. 4 disordered regions span residues 1 to 23, 128 to 180, 595 to 619, and 634 to 664; these read MAPKAGKTKPHKSKGEKKKKEEK, KPPV…GACE, QASSKSESKKTEDPKPEPAVKGLGK, and KANKTEQGKEAPANDTDNTSETEDQKELEKQ. 2 stretches are compositionally biased toward basic and acidic residues: residues 135-145 and 600-612; these read LPKDSEKKESG and SESKKTEDPKPEP. The region spanning 329-603 is the Clu domain; sequence EDETWGGDGG…NQASSKSESK (275 aa). Residues 649-680 are a coiled coil; that stretch reads TDNTSETEDQKELEKQNEEIEKMWKELVTETA. TPR repeat units follow at residues 892 to 925, 934 to 967, 976 to 1009, 1018 to 1051, and 1060 to 1093; these read GRTLLESSKTSLDKGKLEDAVNYGTKALAKLVAV, AGAYSLLAVVLYHTGDFNQATIYQQKALDINERE, MKSYGDLAVFYYRLQHTELALKYVNRALYLLHLT, AATYINVAMMEEGMKNAHVALRYLHEALKCNQRL, and AASYHAIAIALSLMDAYSLSVQHEQTTLQILQAK. 6 disordered regions span residues 1152–1360, 1413–1456, 1468–1513, 1527–1573, 1616–1670, and 1731–1809; these read SGIK…PMLS, KVNA…SPKE, KAFP…SESV, LKTV…ASAP, STPH…PRIM, and LVSE…DYSD. 2 stretches are compositionally biased toward basic and acidic residues: residues 1199 to 1224 and 1230 to 1239; these read SSDKENKSETKSEEKKVENFDLEQSK and KLVKPEATVH. Serine 1244 bears the Phosphoserine mark. Polar residues predominate over residues 1269–1313; that stretch reads KLNTNFMNVTQQPSRSRGKSTNFTSPRTSSNELSISVAGSTSSPA. At serine 1320 the chain carries Phosphoserine. Residues 1343–1354 show a composition bias toward polar residues; it reads LASSACTEQINK. Polar residues-rich tracts occupy residues 1496 to 1511 and 1536 to 1546; these read CLLNKSPTANDSNGSE and NLPNGDSSPKS. Basic and acidic residues predominate over residues 1551 to 1566; sequence DGEKQDACEAQKEMSK. Polar residues predominate over residues 1650-1665; sequence SFPNSTESNGEANQFN. A compositionally biased stretch (basic and acidic residues) spans 1742-1759; sequence SEEKSGSEEESNNDKNAG. Residues 1767 to 1778 show a composition bias toward polar residues; that stretch reads QETTDTPENGHS. The span at 1785 to 1800 shows a compositional bias: basic and acidic residues; the sequence is TTSHETCDEKNGERQG.

As to expression, expressed in the non-epidermal tissues of the true leaves. Not detected in the vegetative shoot meristem and leaf primordia.

The protein resides in the nucleus. It is found in the cytoplasm. The protein localises to the cytosol. In terms of biological role, negatively regulates meristematic tissue proliferation by integrating developmental signals with carbon source availability. May act as the scaffold of a protein complex, which sequesters key factors that are required for the G2 to M transition in meristematic tissues. Together with REC2, REC3 and FMT/CLU, contributes to the establishment of the cellular volume devoted to the chloroplast compartment. In Arabidopsis thaliana (Mouse-ear cress), this protein is Protein REDUCED CHLOROPLAST COVERAGE 2.